Here is a 184-residue protein sequence, read N- to C-terminus: Luciferin-binding protein (184 aa).

EF-hand domains lie at 10 to 45 (YHLRKMKTRMKRVDVTGDGFISREDYELIAVRIAKI), 46 to 81 (AKLSAEKAEETRQEFLRVADQLGLAPGVRISVEEAA), 98 to 133 (MAVIQSLIMYDCIDTDKDGYVSLPEFKAFLQAVGPD), and 134 to 169 (ITDDKAITCFNTLDFNKNGQISRDEFLVTVNDFLFG). Residues Asp111, Asp113, Asp115, Tyr117, Glu122, Asp147, Asn149, Asn151, Gln153, and Glu158 each contribute to the Ca(2+) site.

This Ca(2+)-dependent protein binds to luciferin. The luciferin of LBP is capable of reacting with luciferase and O(2) only when calcium is bound. This is Luciferin-binding protein from Renilla reniformis (Sea pansy).